Here is a 569-residue protein sequence, read N- to C-terminus: Urease subunit alpha (569 aa).

Residues 131 to 569 form the Urease domain; sequence GSIDTHIHFI…VPMAQRYFLL (439 aa). 3 residues coordinate Ni(2+): H136, H138, and K219. K219 is modified (N6-carboxylysine). Residue H221 coordinates substrate. Residues H248 and H274 each coordinate Ni(2+). The active-site Proton donor is H322. D362 contributes to the Ni(2+) binding site.

Belongs to the metallo-dependent hydrolases superfamily. Urease alpha subunit family. Heterotrimer of UreA (gamma), UreB (beta) and UreC (alpha) subunits. Three heterotrimers associate to form the active enzyme. It depends on Ni cation as a cofactor. Carboxylation allows a single lysine to coordinate two nickel ions.

It localises to the cytoplasm. The enzyme catalyses urea + 2 H2O + H(+) = hydrogencarbonate + 2 NH4(+). Its pathway is nitrogen metabolism; urea degradation; CO(2) and NH(3) from urea (urease route): step 1/1. The sequence is that of Urease subunit alpha from Prochlorococcus marinus (strain AS9601).